The primary structure comprises 101 residues: Co-chaperonin GroES (101 aa).

It belongs to the GroES chaperonin family. As to quaternary structure, heptamer of 7 subunits arranged in a ring. Interacts with the chaperonin GroEL.

The protein resides in the cytoplasm. In terms of biological role, together with the chaperonin GroEL, plays an essential role in assisting protein folding. The GroEL-GroES system forms a nano-cage that allows encapsulation of the non-native substrate proteins and provides a physical environment optimized to promote and accelerate protein folding. GroES binds to the apical surface of the GroEL ring, thereby capping the opening of the GroEL channel. The sequence is that of Co-chaperonin GroES from Thermus thermophilus (strain ATCC BAA-163 / DSM 7039 / HB27).